We begin with the raw amino-acid sequence, 214 residues long: Thymidylate kinase (214 aa).

ATP is bound at residue 10–17; the sequence is GGEGAGKS.

The protein belongs to the thymidylate kinase family.

The catalysed reaction is dTMP + ATP = dTDP + ADP. Phosphorylation of dTMP to form dTDP in both de novo and salvage pathways of dTTP synthesis. The chain is Thymidylate kinase from Brucella canis (strain ATCC 23365 / NCTC 10854 / RM-666).